Here is a 334-residue protein sequence, read N- to C-terminus: Peroxidase 65 (334 aa).

A signal peptide spans 1–28 (MSNMQFSRGFNPFVILFCLAVVAPIISA). 4 cysteine pairs are disulfide-bonded: Cys42–Cys123, Cys75–Cys80, Cys129–Cys326, and Cys208–Cys236. Residue His73 is the Proton acceptor of the active site. Ca(2+) contacts are provided by Asp74, Gly79, Asp81, and Ser83. Pro171 contacts substrate. Residue Asn174 is glycosylated (N-linked (GlcNAc...) asparagine). A heme b-binding site is contributed by His201. Residue Thr202 coordinates Ca(2+). Asn238 carries an N-linked (GlcNAc...) asparagine glycan. Ca(2+)-binding residues include Asp250, Thr253, and Asp258. 2 N-linked (GlcNAc...) asparagine glycosylation sites follow: Asn282 and Asn294.

It belongs to the peroxidase family. Classical plant (class III) peroxidase subfamily. Requires heme b as cofactor. The cofactor is Ca(2+).

It localises to the secreted. It catalyses the reaction 2 a phenolic donor + H2O2 = 2 a phenolic radical donor + 2 H2O. Its function is as follows. Removal of H(2)O(2), oxidation of toxic reductants, biosynthesis and degradation of lignin, suberization, auxin catabolism, response to environmental stresses such as wounding, pathogen attack and oxidative stress. These functions might be dependent on each isozyme/isoform in each plant tissue. This is Peroxidase 65 (PER65) from Arabidopsis thaliana (Mouse-ear cress).